Reading from the N-terminus, the 161-residue chain is uncharacterized protein (161 aa).

This is an uncharacterized protein from Archaeoglobus fulgidus (strain ATCC 49558 / DSM 4304 / JCM 9628 / NBRC 100126 / VC-16).